Here is a 459-residue protein sequence, read N- to C-terminus: Cyclooctatin synthase (459 aa).

C408 is a binding site for heme.

This sequence belongs to the cytochrome P450 family. Requires heme as cofactor.

The enzyme catalyses cyclooctat-9-ene-5,7-diol + AH2 + O2 = cyclooctatin + A + H2O. In terms of biological role, involved in the biosynthesis of cyclooctatin, a potent inhibitor of lysophospholipase. Catalyzes the hydroxylation of cyclooctat-9-ene-5,7-diol at C-18 to yield the final product, cyclooctatin. In Streptomyces melanosporofaciens, this protein is Cyclooctatin synthase.